The following is a 425-amino-acid chain: Gamma-glutamyl phosphate reductase (425 aa).

This sequence belongs to the gamma-glutamyl phosphate reductase family.

The protein localises to the cytoplasm. The catalysed reaction is L-glutamate 5-semialdehyde + phosphate + NADP(+) = L-glutamyl 5-phosphate + NADPH + H(+). Its pathway is amino-acid biosynthesis; L-proline biosynthesis; L-glutamate 5-semialdehyde from L-glutamate: step 2/2. Catalyzes the NADPH-dependent reduction of L-glutamate 5-phosphate into L-glutamate 5-semialdehyde and phosphate. The product spontaneously undergoes cyclization to form 1-pyrroline-5-carboxylate. The polypeptide is Gamma-glutamyl phosphate reductase (Opitutus terrae (strain DSM 11246 / JCM 15787 / PB90-1)).